A 202-amino-acid chain; its full sequence is dITP/XTP pyrophosphatase (202 aa).

10–15 contacts substrate; that stretch reads TSNRHK. Asp70 functions as the Proton acceptor in the catalytic mechanism. Residue Asp70 coordinates Mg(2+). Residues Ser71, 153–156, Lys176, and 181–182 each bind substrate; these read FGYD and HR.

This sequence belongs to the HAM1 NTPase family. As to quaternary structure, homodimer. The cofactor is Mg(2+).

It catalyses the reaction XTP + H2O = XMP + diphosphate + H(+). The enzyme catalyses dITP + H2O = dIMP + diphosphate + H(+). The catalysed reaction is ITP + H2O = IMP + diphosphate + H(+). Pyrophosphatase that catalyzes the hydrolysis of nucleoside triphosphates to their monophosphate derivatives, with a high preference for the non-canonical purine nucleotides XTP (xanthosine triphosphate), dITP (deoxyinosine triphosphate) and ITP. Seems to function as a house-cleaning enzyme that removes non-canonical purine nucleotides from the nucleotide pool, thus preventing their incorporation into DNA/RNA and avoiding chromosomal lesions. The chain is dITP/XTP pyrophosphatase from Methylacidiphilum infernorum (isolate V4) (Methylokorus infernorum (strain V4)).